The following is a 69-amino-acid chain: uncharacterized protein (69 aa).

This is an uncharacterized protein from Vaccinia virus (strain Western Reserve) (VACV).